The chain runs to 274 residues: Bis(5'-nucleosyl)-tetraphosphatase, symmetrical (274 aa).

This sequence belongs to the Ap4A hydrolase family.

It carries out the reaction P(1),P(4)-bis(5'-adenosyl) tetraphosphate + H2O = 2 ADP + 2 H(+). In terms of biological role, hydrolyzes diadenosine 5',5'''-P1,P4-tetraphosphate to yield ADP. This is Bis(5'-nucleosyl)-tetraphosphatase, symmetrical from Shewanella sp. (strain ANA-3).